A 316-amino-acid polypeptide reads, in one-letter code: Ribosomal protein L11 methyltransferase (316 aa).

S-adenosyl-L-methionine contacts are provided by Thr157, Gly178, Asp200, and Asn243.

Belongs to the methyltransferase superfamily. PrmA family.

The protein resides in the cytoplasm. It catalyses the reaction L-lysyl-[protein] + 3 S-adenosyl-L-methionine = N(6),N(6),N(6)-trimethyl-L-lysyl-[protein] + 3 S-adenosyl-L-homocysteine + 3 H(+). Functionally, methylates ribosomal protein L11. The protein is Ribosomal protein L11 methyltransferase of Streptococcus pneumoniae (strain 70585).